Reading from the N-terminus, the 511-residue chain is 2-isopropylmalate synthase (511 aa).

The 263-residue stretch at 5 to 267 folds into the Pyruvate carboxyltransferase domain; sequence LFIFDTTLRD…DTRIDATQIV (263 aa). The Mn(2+) site is built by Asp-14, His-202, His-204, and Asn-238. Residues 393-511 form a regulatory domain region; it reads KLLSMKVCSE…SKRERAHPQV (119 aa).

Belongs to the alpha-IPM synthase/homocitrate synthase family. LeuA type 1 subfamily. In terms of assembly, homodimer. The cofactor is Mn(2+).

Its subcellular location is the cytoplasm. It catalyses the reaction 3-methyl-2-oxobutanoate + acetyl-CoA + H2O = (2S)-2-isopropylmalate + CoA + H(+). Its pathway is amino-acid biosynthesis; L-leucine biosynthesis; L-leucine from 3-methyl-2-oxobutanoate: step 1/4. Catalyzes the condensation of the acetyl group of acetyl-CoA with 3-methyl-2-oxobutanoate (2-ketoisovalerate) to form 3-carboxy-3-hydroxy-4-methylpentanoate (2-isopropylmalate). The sequence is that of 2-isopropylmalate synthase from Thiobacillus denitrificans (strain ATCC 25259 / T1).